The following is a 547-amino-acid chain: Chaperonin GroEL (547 aa).

ATP contacts are provided by residues 30-33 (TLGP), K51, 87-91 (DGTTT), G415, and D495.

It belongs to the chaperonin (HSP60) family. In terms of assembly, forms a cylinder of 14 subunits composed of two heptameric rings stacked back-to-back. Interacts with the co-chaperonin GroES.

The protein resides in the cytoplasm. It catalyses the reaction ATP + H2O + a folded polypeptide = ADP + phosphate + an unfolded polypeptide.. Its function is as follows. Together with its co-chaperonin GroES, plays an essential role in assisting protein folding. The GroEL-GroES system forms a nano-cage that allows encapsulation of the non-native substrate proteins and provides a physical environment optimized to promote and accelerate protein folding. The polypeptide is Chaperonin GroEL (Aggregatibacter actinomycetemcomitans (Actinobacillus actinomycetemcomitans)).